Reading from the N-terminus, the 367-residue chain is MSASLDDASVAPLVRKTAAWAWRFLVILAAMVALLWVLNKFEVIVVPVLLALMLSALLVPPVDWLDSRGLPHAVAVTLVLLSGFAVLGGILTFVVSQFIAGLPHLVTEVERSIDSARRWLIEGPAHLRGEQIDNAGNAAIEALRNNQAKLTSGALSTAATITELVTAAVLVLFTLIFFLYGGRSIWQYVTKAFPASVRDRVRAAGRAGYASLIGYARATFLVALTDAAGVGAGLAVMGVPLALPLASLVFFGAFIPLIGAVVAGFLAVVVALLAKGIGYALITVGLLIAVNQLEAHLLQPLVMGRAVSIHPLAVVLAIAAGGVLAGVVGALLAVPTVAFFNNAVQVLLGGNPFADVADVSSDHLTEV.

9 consecutive transmembrane segments (helical) span residues 18–38, 41–61, 74–94, 161–181, 228–248, 249–269, 270–290, 314–334, and 337–357; these read AAWAWRFLVILAAMVALLWVL, FEVIVVPVLLALMLSALLVPP, VAVTLVLLSGFAVLGGILTFV, ITELVTAAVLVLFTLIFFLYG, AGVGAGLAVMGVPLALPLASL, VFFGAFIPLIGAVVAGFLAVV, VALLAKGIGYALITVGLLIAV, VVLAIAAGGVLAGVVGALLAV, and VAFFNNAVQVLLGGNPFADVA.

This sequence belongs to the autoinducer-2 exporter (AI-2E) (TC 2.A.86) family.

Its subcellular location is the cell membrane. The chain is Putative transport protein MT0215 from Mycobacterium tuberculosis (strain CDC 1551 / Oshkosh).